The sequence spans 1072 residues: Carbamoyl phosphate synthase large chain (1072 aa).

Residues methionine 1–glutamate 401 are carboxyphosphate synthetic domain. 12 residues coordinate ATP: arginine 129, arginine 169, glycine 175, glycine 176, lysine 208, isoleucine 210, glutamate 215, glycine 241, valine 242, histidine 243, glutamine 284, and glutamate 298. One can recognise an ATP-grasp 1 domain in the interval arginine 133–valine 327. Positions 284, 298, and 300 each coordinate Mg(2+). The Mn(2+) site is built by glutamine 284, glutamate 298, and asparagine 300. The interval leucine 402–serine 546 is oligomerization domain. The tract at residues isoleucine 547 to glycine 929 is carbamoyl phosphate synthetic domain. The ATP-grasp 2 domain occupies glutamate 671–leucine 861. ATP contacts are provided by arginine 707, arginine 746, glutamate 752, glycine 777, valine 778, histidine 779, serine 780, glutamine 820, and glutamate 832. Residues glutamine 820, glutamate 832, and asparagine 834 each contribute to the Mg(2+) site. Mn(2+)-binding residues include glutamine 820, glutamate 832, and asparagine 834. The region spanning isoleucine 930–alanine 1072 is the MGS-like domain. The tract at residues isoleucine 930–alanine 1072 is allosteric domain.

It belongs to the CarB family. In terms of assembly, composed of two chains; the small (or glutamine) chain promotes the hydrolysis of glutamine to ammonia, which is used by the large (or ammonia) chain to synthesize carbamoyl phosphate. Tetramer of heterodimers (alpha,beta)4. It depends on Mg(2+) as a cofactor. The cofactor is Mn(2+).

The enzyme catalyses hydrogencarbonate + L-glutamine + 2 ATP + H2O = carbamoyl phosphate + L-glutamate + 2 ADP + phosphate + 2 H(+). It catalyses the reaction hydrogencarbonate + NH4(+) + 2 ATP = carbamoyl phosphate + 2 ADP + phosphate + 2 H(+). The protein operates within amino-acid biosynthesis; L-arginine biosynthesis; carbamoyl phosphate from bicarbonate: step 1/1. Its pathway is pyrimidine metabolism; UMP biosynthesis via de novo pathway; (S)-dihydroorotate from bicarbonate: step 1/3. Its function is as follows. Large subunit of the glutamine-dependent carbamoyl phosphate synthetase (CPSase). CPSase catalyzes the formation of carbamoyl phosphate from the ammonia moiety of glutamine, carbonate, and phosphate donated by ATP, constituting the first step of 2 biosynthetic pathways, one leading to arginine and/or urea and the other to pyrimidine nucleotides. The large subunit (synthetase) binds the substrates ammonia (free or transferred from glutamine from the small subunit), hydrogencarbonate and ATP and carries out an ATP-coupled ligase reaction, activating hydrogencarbonate by forming carboxy phosphate which reacts with ammonia to form carbamoyl phosphate. In Bacillus cereus (strain AH820), this protein is Carbamoyl phosphate synthase large chain.